Here is a 177-residue protein sequence, read N- to C-terminus: Cell division protein ZapC (177 aa).

This sequence belongs to the ZapC family. Interacts directly with FtsZ.

The protein resides in the cytoplasm. Contributes to the efficiency of the cell division process by stabilizing the polymeric form of the cell division protein FtsZ. Acts by promoting interactions between FtsZ protofilaments and suppressing the GTPase activity of FtsZ. This is Cell division protein ZapC from Shewanella oneidensis (strain ATCC 700550 / JCM 31522 / CIP 106686 / LMG 19005 / NCIMB 14063 / MR-1).